The following is a 380-amino-acid chain: Cytochrome b (380 aa).

The next 4 helical transmembrane spans lie at 34-54 (FGSL…LLAA), 78-99 (WLIR…YLHI), 114-134 (WNTG…GYVL), and 179-199 (FFAL…IHLA). Heme b-binding residues include H84 and H98. Residues H183 and H197 each coordinate heme b. H202 is an a ubiquinone binding site. 4 consecutive transmembrane segments (helical) span residues 227–247 (LKDI…ALFS), 289–309 (LGGV…PLLH), 321–341 (LSQL…WIGS), and 348–368 (FIII…ILFP).

Belongs to the cytochrome b family. As to quaternary structure, the cytochrome bc1 complex contains 11 subunits: 3 respiratory subunits (MT-CYB, CYC1 and UQCRFS1), 2 core proteins (UQCRC1 and UQCRC2) and 6 low-molecular weight proteins (UQCRH/QCR6, UQCRB/QCR7, UQCRQ/QCR8, UQCR10/QCR9, UQCR11/QCR10 and a cleavage product of UQCRFS1). This cytochrome bc1 complex then forms a dimer. Requires heme b as cofactor.

The protein resides in the mitochondrion inner membrane. In terms of biological role, component of the ubiquinol-cytochrome c reductase complex (complex III or cytochrome b-c1 complex) that is part of the mitochondrial respiratory chain. The b-c1 complex mediates electron transfer from ubiquinol to cytochrome c. Contributes to the generation of a proton gradient across the mitochondrial membrane that is then used for ATP synthesis. This is Cytochrome b (MT-CYB) from Cyrtonyx montezumae (Montezuma quail).